Here is a 256-residue protein sequence, read N- to C-terminus: ATP synthase subunit a (256 aa).

Positions 1–7 are cleaved as a propeptide — removed in mature form; it reads MLNLFIT. 6 helical membrane passes run 33 to 53, 92 to 112, 122 to 142, 148 to 168, 188 to 208, and 209 to 229; these read FTTF…LNLL, YFPL…ISMI, LIFI…IGLT, FFSL…LVLI, VLSG…LMSM, and SIIT…IVVL.

This sequence belongs to the ATPase A chain family. F-type ATPases have 2 components, CF(1) - the catalytic core - and CF(0) - the membrane proton channel. CF(1) has five subunits: alpha(3), beta(3), gamma(1), delta(1), epsilon(1). CF(0) has three main subunits: a, b and c.

The protein resides in the mitochondrion inner membrane. Mitochondrial membrane ATP synthase (F(1)F(0) ATP synthase or Complex V) produces ATP from ADP in the presence of a proton gradient across the membrane which is generated by electron transport complexes of the respiratory chain. F-type ATPases consist of two structural domains, F(1) - containing the extramembraneous catalytic core and F(0) - containing the membrane proton channel, linked together by a central stalk and a peripheral stalk. During catalysis, ATP synthesis in the catalytic domain of F(1) is coupled via a rotary mechanism of the central stalk subunits to proton translocation. Key component of the proton channel; it may play a direct role in the translocation of protons across the membrane. The protein is ATP synthase subunit a (ATP6) of Kluyveromyces lactis (strain ATCC 8585 / CBS 2359 / DSM 70799 / NBRC 1267 / NRRL Y-1140 / WM37) (Yeast).